The primary structure comprises 49 residues: Large ribosomal subunit protein bL33 (49 aa).

The protein belongs to the bacterial ribosomal protein bL33 family.

The chain is Large ribosomal subunit protein bL33 from Lacticaseibacillus casei (strain BL23) (Lactobacillus casei).